The primary structure comprises 376 residues: Alcohol dehydrogenase 1 (376 aa).

Ser2 bears the N-acetylserine mark. Positions 47, 68, 98, 101, 104, 112, and 176 each coordinate Zn(2+). NAD(+) is bound by residues 201 to 206 (GLGGVG), Asp225, and Lys230. An N6-succinyllysine modification is found at Lys235. Position 294 to 296 (294 to 296 (VGV)) interacts with NAD(+). At Lys341 the chain carries N6-succinyllysine. Arg371 provides a ligand contact to NAD(+).

It belongs to the zinc-containing alcohol dehydrogenase family. Class-I subfamily. In terms of assembly, dimer of identical or non-identical chains of three types (A, B, C), which are coded by 3 separate genes at different loci. Zn(2+) serves as cofactor.

The protein localises to the cytoplasm. The catalysed reaction is a primary alcohol + NAD(+) = an aldehyde + NADH + H(+). It carries out the reaction a secondary alcohol + NAD(+) = a ketone + NADH + H(+). This Rattus norvegicus (Rat) protein is Alcohol dehydrogenase 1 (Adh1).